A 450-amino-acid chain; its full sequence is tRNA modification GTPase MnmE (450 aa).

(6S)-5-formyl-5,6,7,8-tetrahydrofolate is bound by residues R21, E80, and K119. The TrmE-type G domain occupies 213-373; it reads GIKVVIIGKP…LEEEIIKSVK (161 aa). N223 serves as a coordination point for K(+). GTP is bound by residues 223-228, 242-248, and 267-270; these read NVGKST, TDIPGTT, and DTAG. Residue S227 participates in Mg(2+) binding. T242, I244, and T247 together coordinate K(+). T248 provides a ligand contact to Mg(2+). (6S)-5-formyl-5,6,7,8-tetrahydrofolate is bound at residue K450.

This sequence belongs to the TRAFAC class TrmE-Era-EngA-EngB-Septin-like GTPase superfamily. TrmE GTPase family. In terms of assembly, homodimer. Heterotetramer of two MnmE and two MnmG subunits. K(+) is required as a cofactor.

It is found in the cytoplasm. Functionally, exhibits a very high intrinsic GTPase hydrolysis rate. Involved in the addition of a carboxymethylaminomethyl (cmnm) group at the wobble position (U34) of certain tRNAs, forming tRNA-cmnm(5)s(2)U34. The sequence is that of tRNA modification GTPase MnmE from Pseudothermotoga lettingae (strain ATCC BAA-301 / DSM 14385 / NBRC 107922 / TMO) (Thermotoga lettingae).